Consider the following 250-residue polypeptide: Phosphoribosylaminoimidazole-succinocarboxamide synthase (250 aa).

It belongs to the SAICAR synthetase family.

It carries out the reaction 5-amino-1-(5-phospho-D-ribosyl)imidazole-4-carboxylate + L-aspartate + ATP = (2S)-2-[5-amino-1-(5-phospho-beta-D-ribosyl)imidazole-4-carboxamido]succinate + ADP + phosphate + 2 H(+). It participates in purine metabolism; IMP biosynthesis via de novo pathway; 5-amino-1-(5-phospho-D-ribosyl)imidazole-4-carboxamide from 5-amino-1-(5-phospho-D-ribosyl)imidazole-4-carboxylate: step 1/2. The protein is Phosphoribosylaminoimidazole-succinocarboxamide synthase of Parasynechococcus marenigrum (strain WH8102).